The primary structure comprises 147 residues: Small ribosomal subunit protein uS12 (147 aa).

The protein belongs to the universal ribosomal protein uS12 family. As to quaternary structure, part of the 30S ribosomal subunit.

With S4 and S5 plays an important role in translational accuracy. Located at the interface of the 30S and 50S subunits. This Hyperthermus butylicus (strain DSM 5456 / JCM 9403 / PLM1-5) protein is Small ribosomal subunit protein uS12.